The sequence spans 187 residues: Inosine triphosphate pyrophosphatase (187 aa).

Residue 11 to 16 (TSNKNK) participates in ITP binding. Glu-39 provides a ligand contact to Mg(2+). Residues Lys-51, 67 to 68 (DT), Lys-84, 143 to 146 (FGWD), Lys-164, and 169 to 170 (HR) contribute to the ITP site.

This sequence belongs to the HAM1 NTPase family. In terms of assembly, homodimer. Mg(2+) serves as cofactor. Mn(2+) is required as a cofactor.

The protein localises to the cytoplasm. It is found in the nucleus. The catalysed reaction is ITP + H2O = IMP + diphosphate + H(+). The enzyme catalyses dITP + H2O = dIMP + diphosphate + H(+). It catalyses the reaction XTP + H2O = XMP + diphosphate + H(+). Its function is as follows. Pyrophosphatase that hydrolyzes non-canonical purine nucleotides such as inosine triphosphate (ITP), deoxyinosine triphosphate (dITP) or xanthosine 5'-triphosphate (XTP) to their respective monophosphate derivatives. The enzyme does not distinguish between the deoxy- and ribose forms. Probably excludes non-canonical purines from RNA and DNA precursor pools, thus preventing their incorporation into RNA and DNA and avoiding chromosomal lesions. The protein is Inosine triphosphate pyrophosphatase of Aspergillus fumigatus (strain ATCC MYA-4609 / CBS 101355 / FGSC A1100 / Af293) (Neosartorya fumigata).